Consider the following 812-residue polypeptide: Xaa-Pro dipeptidyl-peptidase (812 aa).

Active-site charge relay system residues include Ser372, Asp492, and His523.

This sequence belongs to the peptidase S15 family. As to quaternary structure, homodimer.

It localises to the cytoplasm. It catalyses the reaction Hydrolyzes Xaa-Pro-|- bonds to release unblocked, N-terminal dipeptides from substrates including Ala-Pro-|-p-nitroanilide and (sequentially) Tyr-Pro-|-Phe-Pro-|-Gly-Pro-|-Ile.. Its function is as follows. Removes N-terminal dipeptides sequentially from polypeptides having unsubstituted N-termini provided that the penultimate residue is proline. The sequence is that of Xaa-Pro dipeptidyl-peptidase from Pediococcus pentosaceus (strain ATCC 25745 / CCUG 21536 / LMG 10740 / 183-1w).